The primary structure comprises 337 residues: Protein hairy (337 aa).

The interaction with Topors stretch occupies residues 29 to 48 (KSDRRSNKPIMEKRRRARIN). A bHLH domain is found at 31-88 (DRRSNKPIMEKRRRARINNCLNELKTLILDATKKDPARHSKLEKADILEKTVKHLQEL). Positions 107 to 136 (FKAGFADCVNEVSRFPGIEPAQRRRLLQHL) constitute an Orange domain. Disordered stretches follow at residues 146 to 178 (ELHQ…SQQG) and 259 to 311 (MPQR…VIQR). Low complexity predominate over residues 263-301 (TASTGSASSHSSAGYESAPGSSSSCSYAPPSPANSSYEP). Positions 334 to 337 (WRPW) match the WRPW motif motif.

As to quaternary structure, transcription repression requires formation of a complex with a corepressor protein (Groucho). Interacts with gro (via WPRW motif) and Topors. Post-translationally, ubiquitinated by Topors.

The protein localises to the nucleus. Functionally, pair-rule protein that regulates embryonic segmentation and adult bristle patterning. Transcriptional repressor of genes that require a bHLH protein for their transcription (e.g. ftz). In Drosophila melanogaster (Fruit fly), this protein is Protein hairy.